A 380-amino-acid polypeptide reads, in one-letter code: Cytochrome b (380 aa).

The next 4 membrane-spanning stretches (helical) occupy residues 34–54, 78–99, 114–134, and 179–199; these read FGSLLGICLLTQILTGLLLAM, WLIRNLHANGASFFFICIYLHI, WNTGVILLLTLMATAFVGYVL, and FFALHFLLPFMIAGLTLIHLT. Residues His84 and His98 each contribute to the heme b site. The heme b site is built by His183 and His197. His202 contacts a ubiquinone. The next 4 helical transmembrane spans lie at 227-247, 289-309, 321-341, and 348-368; these read LKDILGFMLMLLPLTTLALFS, LGGVLALAASVLVLFLAPFLH, LSQLLFWILVANLFILTWVGS, and FIIIGQLASITYFTILLILFP.

It belongs to the cytochrome b family. In terms of assembly, the cytochrome bc1 complex contains 11 subunits: 3 respiratory subunits (MT-CYB, CYC1 and UQCRFS1), 2 core proteins (UQCRC1 and UQCRC2) and 6 low-molecular weight proteins (UQCRH/QCR6, UQCRB/QCR7, UQCRQ/QCR8, UQCR10/QCR9, UQCR11/QCR10 and a cleavage product of UQCRFS1). This cytochrome bc1 complex then forms a dimer. The cofactor is heme b.

The protein localises to the mitochondrion inner membrane. Its function is as follows. Component of the ubiquinol-cytochrome c reductase complex (complex III or cytochrome b-c1 complex) that is part of the mitochondrial respiratory chain. The b-c1 complex mediates electron transfer from ubiquinol to cytochrome c. Contributes to the generation of a proton gradient across the mitochondrial membrane that is then used for ATP synthesis. The chain is Cytochrome b (MT-CYB) from Ardenna tenuirostris (Short-tailed shearwater).